Reading from the N-terminus, the 431-residue chain is Lipoyl synthase 2, mitochondrial (431 aa).

A disordered region spans residues 21–43 (SPLGKLQEERGEGVAKDPKKDKQ). A compositionally biased stretch (basic and acidic residues) spans 26-40 (LQEERGEGVAKDPKK). Cys-127, Cys-132, Cys-138, Cys-159, Cys-163, Cys-166, and Ser-375 together coordinate [4Fe-4S] cluster. The region spanning 142–364 (DEEEGTATAT…EEEAMAMGFL (223 aa)) is the Radical SAM core domain.

It belongs to the radical SAM superfamily. Lipoyl synthase family. The cofactor is [4Fe-4S] cluster.

Its subcellular location is the mitochondrion. It carries out the reaction [[Fe-S] cluster scaffold protein carrying a second [4Fe-4S](2+) cluster] + N(6)-octanoyl-L-lysyl-[protein] + 2 oxidized [2Fe-2S]-[ferredoxin] + 2 S-adenosyl-L-methionine + 4 H(+) = [[Fe-S] cluster scaffold protein] + N(6)-[(R)-dihydrolipoyl]-L-lysyl-[protein] + 4 Fe(3+) + 2 hydrogen sulfide + 2 5'-deoxyadenosine + 2 L-methionine + 2 reduced [2Fe-2S]-[ferredoxin]. Its pathway is protein modification; protein lipoylation via endogenous pathway; protein N(6)-(lipoyl)lysine from octanoyl-[acyl-carrier-protein]: step 2/2. Its function is as follows. Catalyzes the radical-mediated insertion of two sulfur atoms into the C-6 and C-8 positions of the octanoyl moiety bound to the lipoyl domains of lipoate-dependent enzymes, thereby converting the octanoylated domains into lipoylated derivatives. The protein is Lipoyl synthase 2, mitochondrial of Trypanosoma cruzi (strain CL Brener).